A 212-amino-acid polypeptide reads, in one-letter code: N-(5'-phosphoribosyl)anthranilate isomerase (212 aa).

This sequence belongs to the TrpF family.

It carries out the reaction N-(5-phospho-beta-D-ribosyl)anthranilate = 1-(2-carboxyphenylamino)-1-deoxy-D-ribulose 5-phosphate. It functions in the pathway amino-acid biosynthesis; L-tryptophan biosynthesis; L-tryptophan from chorismate: step 3/5. The protein is N-(5'-phosphoribosyl)anthranilate isomerase (trpF) of Cereibacter sphaeroides (strain ATCC 17023 / DSM 158 / JCM 6121 / CCUG 31486 / LMG 2827 / NBRC 12203 / NCIMB 8253 / ATH 2.4.1.) (Rhodobacter sphaeroides).